A 254-amino-acid chain; its full sequence is MRVLLSNDDGVHAPGLKALADAFEGDEVWVVAPDREQSASSHAISLHRPLRLFEMAPRWYAVDGTPTDAVYMGLNHVLRGARPDVVVSGINHGPNLGNDVLYSGTVAAAMEGALLGVHALAVSLACSPPHVFDEAARFAVALARRVVATQPPAPLLLNVNVPRGPVRGYRFTRLGRRTYGNEVVEKTDPRGRKYYWIGGEGGPTNEDIPGSDCNCVLGEGLVAVTPLHLDSSHDAVLQGLRSWTVPGYEKEPAL.

Residues aspartate 8, aspartate 9, serine 38, and asparagine 91 each coordinate a divalent metal cation.

The protein belongs to the SurE nucleotidase family. It depends on a divalent metal cation as a cofactor.

Its subcellular location is the cytoplasm. It catalyses the reaction a ribonucleoside 5'-phosphate + H2O = a ribonucleoside + phosphate. Functionally, nucleotidase that shows phosphatase activity on nucleoside 5'-monophosphates. This chain is 5'-nucleotidase SurE, found in Anaeromyxobacter sp. (strain Fw109-5).